The chain runs to 790 residues: MGLCCGSTDRVTKYSKEDIQQPTESEPLKYDPDFKGPLSKRSCTDLPCLFLFVTFLCAWGYVAYYAVQHGDLNRLLVPIDSDGRKCGVDSEVRDEPYLVFFNITECAKIDVPISGCSTTQVCVSQCPNQDFDFESANCNPSNVNEIRSKLICKQNVKKSDLTTCQIIRQYIKSQRCAQTMQKSTPLVNRCVSNIPEGQCTLIPKQFRQQPPITSTKFQTSAEQCKEQRELENILEEKISKLQSFLARYVNNLISVLTKNNSVHQLKYLNYHLVLQTLKKGNLKHNPLIITPYLITIHNITVLLTFQMIVEDILESWRMILVFIACSVLASLILIAMLRWIAKPLVWISIIGVITALSYGVYYSFRQYQQIRANPVAAHVNVSPNLSSLVNSWFKSDQTWLWILIALSVILIVLLLVVLVLRKRIVIAIALLKEGSKAVSASFSTVFFPLVPWILQAVVIVFSLLVLLFLASIGVPVYKVNGLNSSLTCVCTNGYMEGDICDPVAFNENCRDTSRIYDQERCLDAACHFQEVDTPGIVRFFHALNVIGFFWCICFVSAFSEMVLAFTFATWYWTRQKSRLPFFVLTRGVTHTVYYHLGTLAFGSLIIAICKIIRAILEYVDHKLKRYDNGFTRAVLCCCRCFFWCLESFLKFLNRNAYIMCAIYGKNFCSSAKDAFSLLTRNVLRVIALDKVTGFLFFLSKLLLASGMAAVTYTYFDSDLPKMQLNYPFVPAVLVFIGTFIIASIFFSVYSVAVDTLFLCFLEDIERNDGSAERPFYMSRGLQKILGKKQK.

A helical membrane pass occupies residues 47-67 (PCLFLFVTFLCAWGYVAYYAV). Asn-102 and Asn-259 each carry an N-linked (GlcNAc...) asparagine glycan. Transmembrane regions (helical) follow at residues 288 to 308 (IITPYLITIHNITVLLTFQMI), 319 to 339 (ILVFIACSVLASLILIAMLRW), and 344 to 364 (LVWISIIGVITALSYGVYYSF). The N-linked (GlcNAc...) asparagine glycan is linked to Asn-384. The next 2 helical transmembrane spans lie at 400-420 (LWILIALSVILIVLLLVVLVL) and 449-469 (LVPWILQAVVIVFSLLVLLFL). Asn-483 carries N-linked (GlcNAc...) asparagine glycosylation. 4 helical membrane-spanning segments follow: residues 545-565 (VIGFFWCICFVSAFSEMVLAF), 592-612 (VYYHLGTLAFGSLIIAICKII), 691-711 (VTGFLFFLSKLLLASGMAAVT), and 728-748 (FVPAVLVFIGTFIIASIFFSV).

This sequence belongs to the CTL (choline transporter-like) family.

It is found in the membrane. The chain is Choline transporter-like 2 from Anopheles gambiae (African malaria mosquito).